The primary structure comprises 188 residues: Holliday junction branch migration complex subunit RuvA (188 aa).

Residues Met1–Ser64 form a domain I region. The tract at residues Asn65–Tyr143 is domain II. Residue Tyr143 is a region of interest, flexible linker. Positions Tyr143 to Ser186 are domain III.

This sequence belongs to the RuvA family. In terms of assembly, homotetramer. Forms an RuvA(8)-RuvB(12)-Holliday junction (HJ) complex. HJ DNA is sandwiched between 2 RuvA tetramers; dsDNA enters through RuvA and exits via RuvB. An RuvB hexamer assembles on each DNA strand where it exits the tetramer. Each RuvB hexamer is contacted by two RuvA subunits (via domain III) on 2 adjacent RuvB subunits; this complex drives branch migration. In the full resolvosome a probable DNA-RuvA(4)-RuvB(12)-RuvC(2) complex forms which resolves the HJ.

The protein localises to the cytoplasm. Its function is as follows. The RuvA-RuvB-RuvC complex processes Holliday junction (HJ) DNA during genetic recombination and DNA repair, while the RuvA-RuvB complex plays an important role in the rescue of blocked DNA replication forks via replication fork reversal (RFR). RuvA specifically binds to HJ cruciform DNA, conferring on it an open structure. The RuvB hexamer acts as an ATP-dependent pump, pulling dsDNA into and through the RuvAB complex. HJ branch migration allows RuvC to scan DNA until it finds its consensus sequence, where it cleaves and resolves the cruciform DNA. Promotes Holliday junction (HJ) branch migration in conjunction with RuvB. The polypeptide is Holliday junction branch migration complex subunit RuvA (Thermotoga maritima (strain ATCC 43589 / DSM 3109 / JCM 10099 / NBRC 100826 / MSB8)).